A 141-amino-acid polypeptide reads, in one-letter code: Large ribosomal subunit protein uL14 (141 aa).

Belongs to the universal ribosomal protein uL14 family. In terms of assembly, part of the 50S ribosomal subunit. Forms a cluster with proteins L3 and L24e, part of which may contact the 16S rRNA in 2 intersubunit bridges.

Its function is as follows. Binds to 23S rRNA. Forms part of two intersubunit bridges in the 70S ribosome. The sequence is that of Large ribosomal subunit protein uL14 from Thermofilum pendens (strain DSM 2475 / Hrk 5).